A 323-amino-acid polypeptide reads, in one-letter code: Malate dehydrogenase (323 aa).

NAD(+) is bound at residue 11–17 (GAAGQIA). Arg92 and Arg98 together coordinate substrate. Residues Asn105, Gln112, and 129 to 131 (VGN) each bind NAD(+). 2 residues coordinate substrate: Asn131 and Arg162. The active-site Proton acceptor is the His187.

Belongs to the LDH/MDH superfamily. MDH type 2 family.

It carries out the reaction (S)-malate + NAD(+) = oxaloacetate + NADH + H(+). Catalyzes the reversible oxidation of malate to oxaloacetate. This is Malate dehydrogenase from Corynebacterium efficiens (strain DSM 44549 / YS-314 / AJ 12310 / JCM 11189 / NBRC 100395).